Consider the following 371-residue polypeptide: MKKTLAALIVGAFAASAANAAVVYNNEGSKVELGGRLSVIAEQSNNTVDDQKQQHGALRNQGSRFHIKATHNFGDGFYAQGYLETRFISHYQDNADHFDDITTKYAYVTLGNKAFGEVKLGRAKTIADDITSAEDKEYGVLNNSKYIRTNGNTVGYTFKGIDGLVLGANYLLAQARDTANPGKKGEVAAQSISNGVQVGAKYDANNIVAGIAYGRTNYRKNIIAPKQNLGRKDQVEGVLSTLGYHFSDLGLLVSLDSGYAKTKYYEQQQQQRSSPTKPRYDEKRYFVSPGFQYELMEDTNVYGNFKYERTSSDEGKKTREQAVLFGVDHKLHKQVLTYIEGAYARTKTNGKGKAETTGKEKSVGVGLRVYF.

Positions 1–20 (MKKTLAALIVGAFAASAANA) are cleaved as a signal peptide.

The protein belongs to the Gram-negative porin family. In terms of assembly, homotrimer.

It localises to the cell outer membrane. Forms pores that allow passive diffusion of small molecules across the outer membrane. The sequence is that of Outer membrane protein P2 (ompP2) from Haemophilus influenzae.